Here is a 63-residue protein sequence, read N- to C-terminus: Putative antitoxin AF_1084 (63 aa).

This sequence belongs to the UPF0165 family.

Possibly the antitoxin component of a type II toxin-antitoxin (TA) system. This is Putative antitoxin AF_1084 from Archaeoglobus fulgidus (strain ATCC 49558 / DSM 4304 / JCM 9628 / NBRC 100126 / VC-16).